The primary structure comprises 264 residues: Thiamine pyrophosphokinase 1 (264 aa).

Over residues 1 to 12 (MPLPTMTHSSSF) the composition is skewed to polar residues. The disordered stretch occupies residues 1–27 (MPLPTMTHSSSFLRLPATSSPHPPPAD).

The protein belongs to the thiamine pyrophosphokinase family.

The protein localises to the cytoplasm. Its subcellular location is the cytosol. It carries out the reaction thiamine + ATP = thiamine diphosphate + AMP + H(+). It functions in the pathway cofactor biosynthesis; thiamine diphosphate biosynthesis; thiamine diphosphate from thiamine: step 1/1. In terms of biological role, catalyzes the phosphorylation of thiamine to thiamine pyrophosphate (TPP). TPP is an active cofactor for enzymes involved in glycolysis and energy production. Plant leaves require high levels of TPP for photosynthesis and carbohydrate metabolism. The polypeptide is Thiamine pyrophosphokinase 1 (TPK1) (Oryza sativa subsp. japonica (Rice)).